Consider the following 66-residue polypeptide: Large ribosomal subunit protein uL30 (66 aa).

The protein belongs to the universal ribosomal protein uL30 family. As to quaternary structure, part of the 50S ribosomal subunit.

The sequence is that of Large ribosomal subunit protein uL30 from Brucella anthropi (strain ATCC 49188 / DSM 6882 / CCUG 24695 / JCM 21032 / LMG 3331 / NBRC 15819 / NCTC 12168 / Alc 37) (Ochrobactrum anthropi).